The sequence spans 273 residues: uncharacterized protein (273 aa).

Residue 10–34 participates in NAD(+) binding; it reads VITGAATGIGQATAEVFANEGARVI. Residue S142 participates in substrate binding. The active-site Proton acceptor is the Y155.

Belongs to the short-chain dehydrogenases/reductases (SDR) family.

This is an uncharacterized protein from Bacillus subtilis (strain 168).